Reading from the N-terminus, the 275-residue chain is Polyamine aminopropyltransferase (275 aa).

The 234-residue stretch at 2 to 235 (EFWFTEKQTE…GMWTFTIGSK (234 aa)) folds into the PABS domain. S-methyl-5'-thioadenosine is bound at residue Q31. Residues H62 and D86 each contribute to the spermidine site. Residues D106 and 137–138 (DG) contribute to the S-methyl-5'-thioadenosine site. D155 (proton acceptor) is an active-site residue. 155-158 (DSTE) contributes to the spermidine binding site. P162 contributes to the S-methyl-5'-thioadenosine binding site.

The protein belongs to the spermidine/spermine synthase family. Homodimer or homotetramer.

Its subcellular location is the cytoplasm. It carries out the reaction S-adenosyl 3-(methylsulfanyl)propylamine + putrescine = S-methyl-5'-thioadenosine + spermidine + H(+). The protein operates within amine and polyamine biosynthesis; spermidine biosynthesis; spermidine from putrescine: step 1/1. In terms of biological role, catalyzes the irreversible transfer of a propylamine group from the amino donor S-adenosylmethioninamine (decarboxy-AdoMet) to putrescine (1,4-diaminobutane) to yield spermidine. In Shouchella clausii (strain KSM-K16) (Alkalihalobacillus clausii), this protein is Polyamine aminopropyltransferase.